Consider the following 220-residue polypeptide: N-(5'-phosphoribosyl)anthranilate isomerase (220 aa).

This sequence belongs to the TrpF family.

The catalysed reaction is N-(5-phospho-beta-D-ribosyl)anthranilate = 1-(2-carboxyphenylamino)-1-deoxy-D-ribulose 5-phosphate. The protein operates within amino-acid biosynthesis; L-tryptophan biosynthesis; L-tryptophan from chorismate: step 3/5. In Leptothrix cholodnii (strain ATCC 51168 / LMG 8142 / SP-6) (Leptothrix discophora (strain SP-6)), this protein is N-(5'-phosphoribosyl)anthranilate isomerase.